A 136-amino-acid chain; its full sequence is Transcription antitermination protein NusB (136 aa).

Belongs to the NusB family.

In terms of biological role, involved in transcription antitermination. Required for transcription of ribosomal RNA (rRNA) genes. Binds specifically to the boxA antiterminator sequence of the ribosomal RNA (rrn) operons. The polypeptide is Transcription antitermination protein NusB (Treponema denticola (strain ATCC 35405 / DSM 14222 / CIP 103919 / JCM 8153 / KCTC 15104)).